The following is a 365-amino-acid chain: Cyclin-D5-2 (365 aa).

The protein belongs to the cyclin family. Cyclin D subfamily.

The polypeptide is Cyclin-D5-2 (CYCD5-2) (Oryza sativa subsp. japonica (Rice)).